Consider the following 98-residue polypeptide: Citrate lyase acyl carrier protein (98 aa).

An O-(phosphoribosyl dephospho-coenzyme A)serine modification is found at Ser-14.

Belongs to the CitD family. Oligomer with a subunit composition of (alpha,beta,gamma)6.

It localises to the cytoplasm. Its function is as follows. Covalent carrier of the coenzyme of citrate lyase. The sequence is that of Citrate lyase acyl carrier protein from Shigella boydii serotype 18 (strain CDC 3083-94 / BS512).